The chain runs to 334 residues: Ribosomal lysine N-methyltransferase 5 (334 aa).

S-adenosyl-L-methionine contacts are provided by residues Trp-88, 155-157 (GAG), Asp-177, Trp-227, and Met-254.

Belongs to the class I-like SAM-binding methyltransferase superfamily. RKM5 family.

Its function is as follows. S-adenosyl-L-methionine-dependent protein-lysine N-methyltransferase that methylates 60S ribosomal protein L1. This is Ribosomal lysine N-methyltransferase 5 (RKM5) from Lachancea thermotolerans (strain ATCC 56472 / CBS 6340 / NRRL Y-8284) (Yeast).